The sequence spans 132 residues: Small ribosomal subunit protein uS8 (132 aa).

Belongs to the universal ribosomal protein uS8 family. As to quaternary structure, part of the 30S ribosomal subunit. Contacts proteins S5 and S12.

In terms of biological role, one of the primary rRNA binding proteins, it binds directly to 16S rRNA central domain where it helps coordinate assembly of the platform of the 30S subunit. The chain is Small ribosomal subunit protein uS8 from Gluconacetobacter diazotrophicus (strain ATCC 49037 / DSM 5601 / CCUG 37298 / CIP 103539 / LMG 7603 / PAl5).